Here is a 512-residue protein sequence, read N- to C-terminus: 2,3-bisphosphoglycerate-independent phosphoglycerate mutase (512 aa).

Residues D12 and S62 each coordinate Mn(2+). S62 acts as the Phosphoserine intermediate in catalysis. Residues H123, 153–154, R185, R191, 260–263, and K333 each bind substrate; these read RD and RPDR. Mn(2+)-binding residues include D400, H404, D441, H442, and H460.

The protein belongs to the BPG-independent phosphoglycerate mutase family. As to quaternary structure, monomer. Mn(2+) serves as cofactor.

It carries out the reaction (2R)-2-phosphoglycerate = (2R)-3-phosphoglycerate. Its pathway is carbohydrate degradation; glycolysis; pyruvate from D-glyceraldehyde 3-phosphate: step 3/5. Functionally, catalyzes the interconversion of 2-phosphoglycerate and 3-phosphoglycerate. The protein is 2,3-bisphosphoglycerate-independent phosphoglycerate mutase of Clostridium perfringens (strain SM101 / Type A).